Here is a 199-residue protein sequence, read N- to C-terminus: Ribonuclease P protein component 3 (199 aa).

The protein belongs to the eukaryotic/archaeal RNase P protein component 3 family. In terms of assembly, consists of a catalytic RNA component and at least 4-5 protein subunits.

It localises to the cytoplasm. It carries out the reaction Endonucleolytic cleavage of RNA, removing 5'-extranucleotides from tRNA precursor.. In terms of biological role, part of ribonuclease P, a protein complex that generates mature tRNA molecules by cleaving their 5'-ends. The polypeptide is Ribonuclease P protein component 3 (Archaeoglobus fulgidus (strain ATCC 49558 / DSM 4304 / JCM 9628 / NBRC 100126 / VC-16)).